The primary structure comprises 201 residues: Recombination protein RecR (201 aa).

A C4-type zinc finger spans residues 57–72; the sequence is CECCRTLTEEPLCRIC. In terms of domain architecture, Toprim spans 81-176; sequence GVLCIVETPA…NTTRIAHGVP (96 aa).

This sequence belongs to the RecR family.

In terms of biological role, may play a role in DNA repair. It seems to be involved in an RecBC-independent recombinational process of DNA repair. It may act with RecF and RecO. The sequence is that of Recombination protein RecR from Idiomarina loihiensis (strain ATCC BAA-735 / DSM 15497 / L2-TR).